A 214-amino-acid polypeptide reads, in one-letter code: ATP-dependent Clp protease proteolytic subunit 2 (214 aa).

The active-site Nucleophile is the serine 110. Residue histidine 135 is part of the active site.

The protein belongs to the peptidase S14 family. In terms of assembly, fourteen ClpP subunits assemble into 2 heptameric rings which stack back to back to give a disk-like structure with a central cavity, resembling the structure of eukaryotic proteasomes.

Its subcellular location is the cytoplasm. The catalysed reaction is Hydrolysis of proteins to small peptides in the presence of ATP and magnesium. alpha-casein is the usual test substrate. In the absence of ATP, only oligopeptides shorter than five residues are hydrolyzed (such as succinyl-Leu-Tyr-|-NHMec, and Leu-Tyr-Leu-|-Tyr-Trp, in which cleavage of the -Tyr-|-Leu- and -Tyr-|-Trp bonds also occurs).. Functionally, cleaves peptides in various proteins in a process that requires ATP hydrolysis. Has a chymotrypsin-like activity. Plays a major role in the degradation of misfolded proteins. In Mycobacterium leprae (strain TN), this protein is ATP-dependent Clp protease proteolytic subunit 2.